The sequence spans 543 residues: Cytochrome P450 1B1 (543 aa).

Residue Cys-470 participates in heme binding.

This sequence belongs to the cytochrome P450 family. The cofactor is heme.

Its subcellular location is the endoplasmic reticulum membrane. The protein localises to the microsome membrane. The protein resides in the mitochondrion. It catalyses the reaction an organic molecule + reduced [NADPH--hemoprotein reductase] + O2 = an alcohol + oxidized [NADPH--hemoprotein reductase] + H2O + H(+). The enzyme catalyses 17beta-estradiol + reduced [NADPH--hemoprotein reductase] + O2 = 2-hydroxy-17beta-estradiol + oxidized [NADPH--hemoprotein reductase] + H2O + H(+). It carries out the reaction 17beta-estradiol + reduced [NADPH--hemoprotein reductase] + O2 = 4-hydroxy-17beta-estradiol + oxidized [NADPH--hemoprotein reductase] + H2O + H(+). The catalysed reaction is estrone + reduced [NADPH--hemoprotein reductase] + O2 = 2-hydroxyestrone + oxidized [NADPH--hemoprotein reductase] + H2O + H(+). It catalyses the reaction estrone + reduced [NADPH--hemoprotein reductase] + O2 = 4-hydroxyestrone + oxidized [NADPH--hemoprotein reductase] + H2O + H(+). The enzyme catalyses testosterone + reduced [NADPH--hemoprotein reductase] + O2 = 6beta,17beta-dihydroxyandrost-4-en-3-one + oxidized [NADPH--hemoprotein reductase] + H2O + H(+). It carries out the reaction progesterone + reduced [NADPH--hemoprotein reductase] + O2 = 6beta-hydroxyprogesterone + oxidized [NADPH--hemoprotein reductase] + H2O + H(+). The catalysed reaction is progesterone + reduced [NADPH--hemoprotein reductase] + O2 = 16alpha-hydroxyprogesterone + oxidized [NADPH--hemoprotein reductase] + H2O + H(+). It catalyses the reaction all-trans-retinol + reduced [NADPH--hemoprotein reductase] + O2 = all-trans-retinal + oxidized [NADPH--hemoprotein reductase] + 2 H2O + H(+). The enzyme catalyses all-trans-retinal + reduced [NADPH--hemoprotein reductase] + O2 = all-trans-retinoate + oxidized [NADPH--hemoprotein reductase] + H2O + 2 H(+). It carries out the reaction (5Z,8Z,11Z,14Z)-eicosatetraenoate + reduced [NADPH--hemoprotein reductase] + O2 = (8R,9S)-epoxy-(5Z,11Z,14Z)-eicosatrienoate + oxidized [NADPH--hemoprotein reductase] + H2O + H(+). The catalysed reaction is (5Z,8Z,11Z,14Z)-eicosatetraenoate + reduced [NADPH--hemoprotein reductase] + O2 = (11R,12S)-epoxy-(5Z,8Z,14Z)-eicosatrienoate + oxidized [NADPH--hemoprotein reductase] + H2O + H(+). It catalyses the reaction (5Z,8Z,11Z,14Z)-eicosatetraenoate + reduced [NADPH--hemoprotein reductase] + O2 = (11S,12R)-epoxy-(5Z,8Z,14Z)-eicosatrienoate + oxidized [NADPH--hemoprotein reductase] + H2O + H(+). The enzyme catalyses (5Z,8Z,11Z,14Z)-eicosatetraenoate + reduced [NADPH--hemoprotein reductase] + O2 = (14S,15R)-epoxy-(5Z,8Z,11Z)-eicosatrienoate + oxidized [NADPH--hemoprotein reductase] + H2O + H(+). It carries out the reaction (5Z,8Z,11Z,14Z)-eicosatetraenoate + reduced [NADPH--hemoprotein reductase] + O2 = (14R,15S)-epoxy-(5Z,8Z,11Z)-eicosatrienoate + oxidized [NADPH--hemoprotein reductase] + H2O + H(+). The catalysed reaction is (5S)-hydroperoxy-(6E,8Z,11Z,14Z)-eicosatetraenoate = 5-oxo-(6E,8Z,11Z,14Z)-eicosatetraenoate + H2O. It catalyses the reaction (12S)-hydroperoxy-(5Z,8Z,10E,14Z)-eicosatetraenoate = 12-oxo-(5Z,8Z,10E,14Z)-eicosatetraenoate + H2O. The enzyme catalyses (15S)-hydroperoxy-(5Z,8Z,11Z,13E)-eicosatetraenoate = 15-oxo-(5Z,8Z,11Z,13E)-eicosatetraenoate + H2O. It carries out the reaction (13S)-hydroperoxy-(9Z,11E)-octadecadienoate = 13-oxo-(9Z,11E)-octadecadienoate + H2O. The protein operates within steroid hormone biosynthesis. Its pathway is cofactor metabolism; retinol metabolism. It functions in the pathway lipid metabolism; arachidonate metabolism. Its activity is regulated as follows. Enzyme activity is increased by cytochrome b5. Enzyme activity is increased by liposomes containing anionic phospholipids, phosphatidic acid and cardiolipin. Inhibited by naringenin with an IC(50) of 5 uM. A cytochrome P450 monooxygenase involved in the metabolism of various endogenous substrates, including fatty acids, steroid hormones and vitamins. Mechanistically, uses molecular oxygen inserting one oxygen atom into a substrate, and reducing the second into a water molecule, with two electrons provided by NADPH via cytochrome P450 reductase (NADPH--hemoprotein reductase). Exhibits catalytic activity for the formation of hydroxyestrogens from 17beta-estradiol (E2), namely 2- and 4-hydroxy E2. Metabolizes testosterone and progesterone to B or D ring hydroxylated metabolites. May act as a major enzyme for all-trans retinoic acid biosynthesis in extrahepatic tissues. Catalyzes two successive oxidative transformation of all-trans retinol to all-trans retinal and then to the active form all-trans retinoic acid. Catalyzes the epoxidation of double bonds of certain PUFA. Converts arachidonic acid toward epoxyeicosatrienoic acid (EpETrE) regioisomers, 8,9-, 11,12-, and 14,15- EpETrE, that function as lipid mediators in the vascular system. Additionally, displays dehydratase activity toward oxygenated eicosanoids including hydroperoxyeicosatetraenoates (HpETEs). This activity is independent of cytochrome P450 reductase, NADPH, and O2. Also involved in the oxidative metabolism of xenobiotics, particularly converting polycyclic aromatic hydrocarbons and heterocyclic aryl amines procarcinogens to DNA-damaging products. Plays an important role in retinal vascular development. Under ambient/hyperoxic O2 conditions, promotes angiogenesis and capillary morphogenesis of retinal endothelial cells and pericytes, likely by metabolizing the oxygenated products symptomatic of oxidative stress. Also, contributes to oxidative homeostasis and ultrastructural organization and function of trabecular meshwork tissue through modulation of POSTN expression. In Rattus norvegicus (Rat), this protein is Cytochrome P450 1B1.